The sequence spans 220 residues: Thiopurine S-methyltransferase (220 aa).

S-adenosyl-L-methionine contacts are provided by Trp-10, Leu-45, Glu-66, and Arg-123.

It belongs to the class I-like SAM-binding methyltransferase superfamily. TPMT family.

It localises to the cytoplasm. It catalyses the reaction S-adenosyl-L-methionine + a thiopurine = S-adenosyl-L-homocysteine + a thiopurine S-methylether.. This is Thiopurine S-methyltransferase from Nitrosospira multiformis (strain ATCC 25196 / NCIMB 11849 / C 71).